Reading from the N-terminus, the 111-residue chain is uncharacterized protein (111 aa).

It localises to the mitochondrion. This is an uncharacterized protein from Arabidopsis thaliana (Mouse-ear cress).